The sequence spans 552 residues: Cation/acetate symporter ActP (552 aa).

The next 14 membrane-spanning stretches (helical) occupy residues 6-26 (LLAV…AIAG), 35-55 (MEAI…TYWA), 78-98 (GLAM…SALV), 103-123 (FDGL…LFLI), 151-171 (LSAC…MVGA), 185-205 (VAVV…GMLA), 208-228 (WVQI…AIMV), 264-284 (ISAL…PHIL), 305-325 (GLMG…ILLV), 357-377 (LFLG…VAGL), 407-427 (VSKI…ILFE), 431-451 (IAFM…PIIL), 467-487 (GGWL…TIWV), and 496-516 (IFPY…GTWL).

The protein belongs to the sodium:solute symporter (SSF) (TC 2.A.21) family.

The protein localises to the cell inner membrane. In terms of biological role, transports acetate. The chain is Cation/acetate symporter ActP from Erwinia tasmaniensis (strain DSM 17950 / CFBP 7177 / CIP 109463 / NCPPB 4357 / Et1/99).